A 149-amino-acid chain; its full sequence is Large ribosomal subunit protein bL9 (149 aa).

The protein belongs to the bacterial ribosomal protein bL9 family.

Its function is as follows. Binds to the 23S rRNA. The chain is Large ribosomal subunit protein bL9 from Helicobacter pylori (strain ATCC 700392 / 26695) (Campylobacter pylori).